The primary structure comprises 140 residues: Large ribosomal subunit protein uL16 (140 aa).

It belongs to the universal ribosomal protein uL16 family. Part of the 50S ribosomal subunit.

Functionally, binds 23S rRNA and is also seen to make contacts with the A and possibly P site tRNAs. In Citrifermentans bemidjiense (strain ATCC BAA-1014 / DSM 16622 / JCM 12645 / Bem) (Geobacter bemidjiensis), this protein is Large ribosomal subunit protein uL16.